We begin with the raw amino-acid sequence, 469 residues long: Probable ribonuclease FAU-1 (469 aa).

This sequence belongs to the FAU-1 family.

In terms of biological role, probable RNase involved in rRNA stability through maturation and/or degradation of precursor rRNAs. Binds to RNA in loop regions with AU-rich sequences. This chain is Probable ribonuclease FAU-1, found in Pyrococcus abyssi (strain GE5 / Orsay).